Reading from the N-terminus, the 308-residue chain is tRNA dimethylallyltransferase (308 aa).

Residue 14–21 coordinates ATP; it reads GPTASGKT. 16-21 contacts substrate; that stretch reads TASGKT. Interaction with substrate tRNA regions lie at residues 39 to 42, 163 to 167, and 244 to 249; these read DSAL, QRLAR, and RCVGYR.

It belongs to the IPP transferase family. As to quaternary structure, monomer. The cofactor is Mg(2+).

The enzyme catalyses adenosine(37) in tRNA + dimethylallyl diphosphate = N(6)-dimethylallyladenosine(37) in tRNA + diphosphate. Functionally, catalyzes the transfer of a dimethylallyl group onto the adenine at position 37 in tRNAs that read codons beginning with uridine, leading to the formation of N6-(dimethylallyl)adenosine (i(6)A). This Shewanella piezotolerans (strain WP3 / JCM 13877) protein is tRNA dimethylallyltransferase.